A 316-amino-acid polypeptide reads, in one-letter code: Melanocyte-stimulating hormone receptor (316 aa).

Residues 1–37 (MPMQGAQRKLLGSLNSTPTATSNLGLAANHTGAPCLE) are Extracellular-facing. N-linked (GlcNAc...) asparagine glycosylation occurs at N29. The helical transmembrane segment at 38–63 (VSIPDGLFLSLGLVSLVENVLVVAAI) threads the bilayer. The Cytoplasmic portion of the chain corresponds to 64 to 72 (AKNRNLHSS). The chain crosses the membrane as a helical span at residues 73-93 (MYCFICCLALSDLLVSGSNML). The Extracellular segment spans residues 94–118 (ETAVILLLETGALATRTSVVQQLHN). The helical transmembrane segment at 119–140 (TINVLTCSSMLCSLCFLGAIAV) threads the bilayer. The Cytoplasmic portion of the chain corresponds to 141-163 (DRYISIFYALRYHSIMTLPRAQR). The helical transmembrane segment at 164–183 (AIAAIWVASVLSSTLFITYY) threads the bilayer. The Extracellular segment spans residues 184 to 191 (DHAAVLLC). The helical transmembrane segment at 192 to 211 (LVVFFLAMLVLMAVLYVHML) threads the bilayer. Residues 212–240 (ARACQHAHGIIRLHKRQTPAHQAFGLRGA) lie on the Cytoplasmic side of the membrane. A helical membrane pass occupies residues 241–266 (ATLTILLGIFFLCWGPFFLHLTLVVF). Residues 267–279 (CPQHLTCSCIFKN) are Extracellular-facing. A helical transmembrane segment spans residues 280–300 (FKVFLTLIICNTIIDPLIYAF). Topologically, residues 301–316 (RSQELRRTLKEVLCSW) are cytoplasmic. The S-palmitoyl cysteine moiety is linked to residue C314.

Belongs to the G-protein coupled receptor 1 family. Interacts with MGRN1, but does not undergo MGRN1-mediated ubiquitination; this interaction competes with GNAS-binding and thus inhibits agonist-induced cAMP production. Interacts with OPN3; the interaction results in a decrease in MC1R-mediated cAMP signaling and ultimately a decrease in melanin production in melanocytes.

It is found in the cell membrane. Functionally, receptor for MSH (alpha, beta and gamma) and ACTH. The activity of this receptor is mediated by G proteins which activate adenylate cyclase. Mediates melanogenesis, the production of eumelanin (black/brown) and phaeomelanin (red/yellow), via regulation of cAMP signaling in melanocytes. In Saguinus geoffroyi (Geoffroy's tamarin), this protein is Melanocyte-stimulating hormone receptor (MC1R).